Consider the following 244-residue polypeptide: DNA repair protein RecO (244 aa).

This sequence belongs to the RecO family.

In terms of biological role, involved in DNA repair and RecF pathway recombination. This Caldicellulosiruptor bescii (strain ATCC BAA-1888 / DSM 6725 / KCTC 15123 / Z-1320) (Anaerocellum thermophilum) protein is DNA repair protein RecO.